A 484-amino-acid chain; its full sequence is Glutamate--tRNA ligase (484 aa).

The 'HIGH' region signature appears at 11–21; sequence PSPTGLLHIGN. The 'KMSKS' region motif lies at 255–259; that stretch reads KLSKR. Lysine 258 provides a ligand contact to ATP.

It belongs to the class-I aminoacyl-tRNA synthetase family. Glutamate--tRNA ligase type 1 subfamily. In terms of assembly, monomer.

The protein resides in the cytoplasm. The catalysed reaction is tRNA(Glu) + L-glutamate + ATP = L-glutamyl-tRNA(Glu) + AMP + diphosphate. Its function is as follows. Catalyzes the attachment of glutamate to tRNA(Glu) in a two-step reaction: glutamate is first activated by ATP to form Glu-AMP and then transferred to the acceptor end of tRNA(Glu). This is Glutamate--tRNA ligase from Streptococcus suis (strain 98HAH33).